Reading from the N-terminus, the 1028-residue chain is Formate dehydrogenase major subunit (1028 aa).

A signal peptide (tat-type signal) is located at residues 1 to 33; that stretch reads MQVSRRKFFKICAGGMAGTSAAMLGFAPANVLA. Residues 43–114 enclose the 4Fe-4S Mo/W bis-MGD-type domain; the sequence is AFESRNTCTY…GSLDYVNSES (72 aa). Cys50, Cys53, Cys57, and Cys100 together coordinate [4Fe-4S] cluster. A non-standard amino acid (selenocysteine) is located at residue Sec204.

This sequence belongs to the prokaryotic molybdopterin-containing oxidoreductase family. In terms of assembly, formate dehydrogenase is a membrane-bound complex, formed by subunits alpha, beta and gamma. The cofactor is Mo-bis(molybdopterin guanine dinucleotide). It depends on [4Fe-4S] cluster as a cofactor. Predicted to be exported by the Tat system. The position of the signal peptide cleavage has not been experimentally proven.

The protein localises to the periplasm. It carries out the reaction formate + NAD(+) = CO2 + NADH. Allows to use formate as major electron donor during anaerobic respiration. Subunit alpha possibly forms the active site. The protein is Formate dehydrogenase major subunit (fdxG) of Haemophilus influenzae (strain ATCC 51907 / DSM 11121 / KW20 / Rd).